Here is a 339-residue protein sequence, read N- to C-terminus: MPDPRFFDSLGPALLSELAQAGAATLADAALGERVITHAAPLDASDAQAITFFSDAKRKDAAASTRAGACFVRPEHQGFLPPTCAALVTGRPQAAWAAAANRLHAPRRHEAGAPSLHPDAALEDGVALAPNVTIGQGASIGRGTRIGPGVVIGPGVVIGRYCRIGANAVIGFAMLGDNVAISAGAVIGEAGFGAALGPRGMVDLPQLGRVVIQDNVTLGANSCVDRGAFGDTTIGENTKIDNLVHVAHNVRIGRNCVLAAYTGVSGSTVVGDGVAFGGKAGVADHLNIGSGASIGAAASVFKDVPDGETWTGFPARPLKRWLRETAWLSRMAGGRGTRG.

The active-site Proton acceptor is the His248.

This sequence belongs to the transferase hexapeptide repeat family. LpxD subfamily. In terms of assembly, homotrimer.

It catalyses the reaction a UDP-3-O-[(3R)-3-hydroxyacyl]-alpha-D-glucosamine + a (3R)-hydroxyacyl-[ACP] = a UDP-2-N,3-O-bis[(3R)-3-hydroxyacyl]-alpha-D-glucosamine + holo-[ACP] + H(+). Its pathway is bacterial outer membrane biogenesis; LPS lipid A biosynthesis. In terms of biological role, catalyzes the N-acylation of UDP-3-O-acylglucosamine using 3-hydroxyacyl-ACP as the acyl donor. Is involved in the biosynthesis of lipid A, a phosphorylated glycolipid that anchors the lipopolysaccharide to the outer membrane of the cell. This chain is UDP-3-O-acylglucosamine N-acyltransferase, found in Caulobacter vibrioides (strain NA1000 / CB15N) (Caulobacter crescentus).